The following is a 110-amino-acid chain: MEVAAKLFGARLSAQKARLVADQVRGKRVEEALDILTFSPKKASSIIKKVLESAIANAEHNEGLDVDELKVATICVDEGPTMKRIKPRAKGRADRIFKRTCHITVKVAEE.

Belongs to the universal ribosomal protein uL22 family. In terms of assembly, part of the 50S ribosomal subunit.

Functionally, this protein binds specifically to 23S rRNA; its binding is stimulated by other ribosomal proteins, e.g. L4, L17, and L20. It is important during the early stages of 50S assembly. It makes multiple contacts with different domains of the 23S rRNA in the assembled 50S subunit and ribosome. Its function is as follows. The globular domain of the protein is located near the polypeptide exit tunnel on the outside of the subunit, while an extended beta-hairpin is found that lines the wall of the exit tunnel in the center of the 70S ribosome. This chain is Large ribosomal subunit protein uL22, found in Hahella chejuensis (strain KCTC 2396).